The sequence spans 179 residues: Large ribosomal subunit protein uL5 (179 aa).

The protein belongs to the universal ribosomal protein uL5 family. In terms of assembly, part of the 50S ribosomal subunit; part of the 5S rRNA/L5/L18/L25 subcomplex. Contacts the 5S rRNA and the P site tRNA. Forms a bridge to the 30S subunit in the 70S ribosome.

In terms of biological role, this is one of the proteins that bind and probably mediate the attachment of the 5S RNA into the large ribosomal subunit, where it forms part of the central protuberance. In the 70S ribosome it contacts protein S13 of the 30S subunit (bridge B1b), connecting the 2 subunits; this bridge is implicated in subunit movement. Contacts the P site tRNA; the 5S rRNA and some of its associated proteins might help stabilize positioning of ribosome-bound tRNAs. The sequence is that of Large ribosomal subunit protein uL5 from Yersinia enterocolitica serotype O:8 / biotype 1B (strain NCTC 13174 / 8081).